Here is a 203-residue protein sequence, read N- to C-terminus: Ribosomal RNA large subunit methyltransferase E (203 aa).

Positions 59, 61, 79, 97, and 119 each coordinate S-adenosyl-L-methionine. The Proton acceptor role is filled by Lys-159.

It belongs to the class I-like SAM-binding methyltransferase superfamily. RNA methyltransferase RlmE family.

The protein localises to the cytoplasm. The catalysed reaction is uridine(2552) in 23S rRNA + S-adenosyl-L-methionine = 2'-O-methyluridine(2552) in 23S rRNA + S-adenosyl-L-homocysteine + H(+). Its function is as follows. Specifically methylates the uridine in position 2552 of 23S rRNA at the 2'-O position of the ribose in the fully assembled 50S ribosomal subunit. The polypeptide is Ribosomal RNA large subunit methyltransferase E (Desulforapulum autotrophicum (strain ATCC 43914 / DSM 3382 / VKM B-1955 / HRM2) (Desulfobacterium autotrophicum)).